The primary structure comprises 218 residues: MANVTLNVTDAKGQATGTVEAPEALFGVSAEDVQAHIPLIHQVVTAQLAAARQGTHATKTRGMVSGGGKKPWKQKGTGRARQGSIRAPQWYHGGTVFGPQPRDYSQRTPKKMKAAALRYALSDRANAGRVAVVEFGITEPSTKAAVAALAPITADKFTTVVFTRDNINEWLSVRNIPTVHPIFVDQLNTYDVITSQYVVFTKEAFEAFVAAKTEPKEA.

The disordered stretch occupies residues 55 to 83; sequence THATKTRGMVSGGGKKPWKQKGTGRARQG.

It belongs to the universal ribosomal protein uL4 family. Part of the 50S ribosomal subunit.

Functionally, one of the primary rRNA binding proteins, this protein initially binds near the 5'-end of the 23S rRNA. It is important during the early stages of 50S assembly. It makes multiple contacts with different domains of the 23S rRNA in the assembled 50S subunit and ribosome. Forms part of the polypeptide exit tunnel. The chain is Large ribosomal subunit protein uL4 from Bifidobacterium longum (strain DJO10A).